Here is a 72-residue protein sequence, read N- to C-terminus: Translation initiation factor IF-1 (72 aa).

In terms of domain architecture, S1-like spans 1 to 72 (MSKDDSIEFE…TKGRITYRMK (72 aa)).

The protein belongs to the IF-1 family. In terms of assembly, component of the 30S ribosomal translation pre-initiation complex which assembles on the 30S ribosome in the order IF-2 and IF-3, IF-1 and N-formylmethionyl-tRNA(fMet); mRNA recruitment can occur at any time during PIC assembly.

The protein resides in the cytoplasm. In terms of biological role, one of the essential components for the initiation of protein synthesis. Stabilizes the binding of IF-2 and IF-3 on the 30S subunit to which N-formylmethionyl-tRNA(fMet) subsequently binds. Helps modulate mRNA selection, yielding the 30S pre-initiation complex (PIC). Upon addition of the 50S ribosomal subunit IF-1, IF-2 and IF-3 are released leaving the mature 70S translation initiation complex. This is Translation initiation factor IF-1 from Xanthomonas euvesicatoria pv. vesicatoria (strain 85-10) (Xanthomonas campestris pv. vesicatoria).